The sequence spans 151 residues: Kinetoplast-associated protein 1 (151 aa).

A propeptide spanning residues 1–9 (MLRVSVRSL) is cleaved from the precursor. The disordered stretch occupies residues 13 to 151 (ASSKAGSKAA…KKGAAKKAHK (139 aa)). 3 stretches are compositionally biased toward low complexity: residues 15–49 (SKAGSKAAVPAAAAAASAPLSPATSAASARAVPPV), 70–91 (AAAAPAKKAAAPKAAKAKTPAK), and 101–111 (SKPSAPKQAAG). Residues 112–151 (KMRKAAGKAQRKIKAAARKAAPKKMAKSFGKKGAAKKAHK) show a composition bias toward basic residues.

The protein belongs to the KAP family. Associates with the kinetoplast DNA network.

Its subcellular location is the mitochondrion matrix. The protein resides in the kinetoplast. Functionally, histone H1-like DNA-binding protein involved in the organization and segregation of kinetoplast DNA (kDNA). The mitochondrial DNA of kinetoplastid protozoa consists of about 5,000 minicircles and 20 to 30 maxicircles. These circular DNAs are held together by catenation into a highly organized compact disk structure referred to as a kinetoplast DNA (kDNA) network. Binds preferentially to a specific fragment of minicircle DNA and is able to compact kDNA networks through DNA charge neutralization and condensation. The polypeptide is Kinetoplast-associated protein 1 (KAP4) (Crithidia fasciculata).